The chain runs to 282 residues: Acetylglutamate kinase (282 aa).

Substrate contacts are provided by residues 62–63 (GG), R84, and N178.

Belongs to the acetylglutamate kinase family. ArgB subfamily.

It localises to the cytoplasm. It carries out the reaction N-acetyl-L-glutamate + ATP = N-acetyl-L-glutamyl 5-phosphate + ADP. Its pathway is amino-acid biosynthesis; L-arginine biosynthesis; N(2)-acetyl-L-ornithine from L-glutamate: step 2/4. Catalyzes the ATP-dependent phosphorylation of N-acetyl-L-glutamate. This is Acetylglutamate kinase from Thermotoga sp. (strain RQ2).